The primary structure comprises 341 residues: Alanine racemase (341 aa).

Lys33 (proton acceptor; specific for D-alanine) is an active-site residue. Lys33 carries the post-translational modification N6-(pyridoxal phosphate)lysine. Arg126 is a substrate binding site. Tyr236 (proton acceptor; specific for L-alanine) is an active-site residue. Residue Met284 coordinates substrate.

It belongs to the alanine racemase family. It depends on pyridoxal 5'-phosphate as a cofactor.

The catalysed reaction is L-alanine = D-alanine. It functions in the pathway amino-acid biosynthesis; D-alanine biosynthesis; D-alanine from L-alanine: step 1/1. Functionally, catalyzes the interconversion of L-alanine and D-alanine. The polypeptide is Alanine racemase (alr) (Aquifex pyrophilus).